The chain runs to 201 residues: Ras-related protein Rab-35 (201 aa).

The GTP site is built by Gly-18, Val-19, Gly-20, Lys-21, Ser-22, Ser-23, Ser-34, Gly-35, Tyr-37, Thr-39, and Thr-40. Ser-22 lines the Mg(2+) pocket. The Switch 1 motif lies at 30-42 (DNTFSGSYITTIG). Residues Thr-40 and Asp-63 each contribute to the Mg(2+) site. The Switch 2 motif lies at 64–80 (TAGQERFRTITSTYYRG). Position 66 (Gly-66) interacts with GTP. Residue Thr-72 is modified to Phosphothreonine; by LRRK2. The residue at position 75 (Ser-75) is an O-(2-cholinephosphoryl)serine. Position 77 is an O-AMP-tyrosine (Tyr-77). Residues Asn-120, Lys-121, Asp-123, Ala-151, and Lys-152 each contribute to the GTP site. 2 S-geranylgeranyl cysteine lipidation sites follow: Cys-200 and Cys-201.

The protein belongs to the small GTPase superfamily. Rab family. As to quaternary structure, interacts with DENND1A and DENND1B; in a nucleotide-dependent manner. Interacts with DENND1C; weak interaction which is nucleotide-independent. Interacts (GTP-bound form) with ACAP2, RUSC2, OCRL MICAL1 and MICALL1; the interaction is direct and probably recruits these effectors to membranes. Interacts with EHD1; the interaction is indirect through MICALL1 and probably recruits EHD1 to membranes. Interacts with GDI1, GDI2, CHM and CHML; phosphorylation at Thr-72 by LRRK2 disrupts these interactions. Requires Mg(2+) as cofactor. In terms of processing, phosphorylation at Thr-72 by LRRK2 prevents the association of regulatory proteins including CHM, CHML and GDP dissociation inhibitors GDI1 and GDI2. AMPylation at Tyr-77 by L.pneumophila DrrA occurs in the switch 2 region and leads to moderate inactivation of the GTPase activity. It appears to prolong the lifetime of the GTP state of RAB1B by restricting access of GTPase effectors to switch 2 and blocking effector-stimulated GTP hydrolysis, thereby rendering RAB35 constitutively active. Post-translationally, phosphocholinated by L.pneumophila AnkX. Both GDP-bound and GTP-bound forms can be phosphocholinated. Phosphocholination inhibits the GEF activity of DENND1A.

The protein resides in the cell membrane. The protein localises to the membrane. It localises to the clathrin-coated pit. Its subcellular location is the cytoplasmic vesicle. It is found in the clathrin-coated vesicle. The protein resides in the endosome. The protein localises to the melanosome. The catalysed reaction is GTP + H2O = GDP + phosphate + H(+). Regulated by guanine nucleotide exchange factors (GEFs) including DENND1A, DENND1B and DENND1C which promote the exchange of bound GDP for free GTP. Regulated by GTPase activating proteins (GAPs) including TBC1D10 and TBC1D13 which increase GTP hydrolysis activity. Inhibited by GDP dissociation inhibitors (GDIs) which prevent Rab-GDP dissociation. Its function is as follows. The small GTPases Rab are key regulators of intracellular membrane trafficking, from the formation of transport vesicles to their fusion with membranes. Rabs cycle between an inactive GDP-bound form and an active GTP-bound form that is able to recruit to membranes different sets of downstream effectors directly responsible for vesicle formation, movement, tethering and fusion. RAB35 is involved in the process of endocytosis and is an essential rate-limiting regulator of the fast recycling pathway back to the plasma membrane. During cytokinesis, required for the postfurrowing terminal steps, namely for intercellular bridge stability and abscission, possibly by controlling phosphatidylinositol 4,5-bis phosphate (PIP2) and SEPT2 localization at the intercellular bridge. May indirectly regulate neurite outgrowth. Together with TBC1D13 may be involved in regulation of insulin-induced glucose transporter SLC2A4/GLUT4 translocation to the plasma membrane in adipocytes. The sequence is that of Ras-related protein Rab-35 from Homo sapiens (Human).